The sequence spans 142 residues: Mitochondrial import receptor subunit TOM22 homolog (142 aa).

Residues 1–18 (MAAAVAAAGAGEPLSPEE) show a composition bias toward low complexity. Positions 1–41 (MAAAVAAAGAGEPLSPEELLPKAEAEKAEEELEEDDDDELD) are disordered. An N-acetylalanine modification is found at A2. Topologically, residues 2–83 (AAAVAAAGAG…AQKMYRFSRA (82 aa)) are cytoplasmic. S15 is modified (phosphoserine). The segment covering 27-41 (KAEEELEEDDDDELD) has biased composition (acidic residues). The import sequence; necessary for mitochondrion outer membrane localization and integration in the TOM complex stretch occupies residues 41 to 50 (DETLSERLWG). Residue T43 is modified to Phosphothreonine. S45 carries the phosphoserine modification. Residues 83-103 (AALWIGTTSFMILVLPVVFET) form a TMD; necessary for mitochondrion outer membrane localization and integration in the TOM complex region. Residues 84–103 (ALWIGTTSFMILVLPVVFET) traverse the membrane as a helical segment. At 104–142 (EKLQMEQQQQLQQRQILLGPNTGLSGGMPGALPPLPGKM) the chain is on the mitochondrial intermembrane side. Residues 123–142 (PNTGLSGGMPGALPPLPGKM) form a C-tail signal; necessary for mitochondrion outer membrane localization and integration in the TOM complex region.

Belongs to the Tom22 family. As to quaternary structure, forms part of the preprotein translocase complex of the outer mitochondrial membrane (TOM complex) which consists of at least 7 different proteins (TOMM5, TOMM6, TOMM7, TOMM20, TOMM22, TOMM40 and TOMM70). Interacts with PPP2R2B and TOMM40.

The protein localises to the mitochondrion outer membrane. Its function is as follows. Central receptor component of the translocase of the outer membrane of mitochondria (TOM complex) responsible for the recognition and translocation of cytosolically synthesized mitochondrial preproteins. Together with the peripheral receptor TOM20 functions as the transit peptide receptor and facilitates the movement of preproteins into the translocation pore. Required for the translocation across the mitochondrial outer membrane of cytochrome P450 monooxygenases. This chain is Mitochondrial import receptor subunit TOM22 homolog (Tomm22), found in Mus musculus (Mouse).